The chain runs to 434 residues: Methylenetetrahydrofolate--tRNA-(uracil-5-)-methyltransferase TrmFO (434 aa).

Residue 10 to 15 (GAGLAG) participates in FAD binding.

The protein belongs to the MnmG family. TrmFO subfamily. The cofactor is FAD.

It is found in the cytoplasm. It catalyses the reaction uridine(54) in tRNA + (6R)-5,10-methylene-5,6,7,8-tetrahydrofolate + NADH + H(+) = 5-methyluridine(54) in tRNA + (6S)-5,6,7,8-tetrahydrofolate + NAD(+). The catalysed reaction is uridine(54) in tRNA + (6R)-5,10-methylene-5,6,7,8-tetrahydrofolate + NADPH + H(+) = 5-methyluridine(54) in tRNA + (6S)-5,6,7,8-tetrahydrofolate + NADP(+). Its function is as follows. Catalyzes the folate-dependent formation of 5-methyl-uridine at position 54 (M-5-U54) in all tRNAs. The polypeptide is Methylenetetrahydrofolate--tRNA-(uracil-5-)-methyltransferase TrmFO (Bacillus cereus (strain AH820)).